The chain runs to 464 residues: GDNF family receptor alpha-2 (464 aa).

An N-terminal signal peptide occupies residues 1–21; that stretch reads MILANVFCLFFFLDETLRSLA. Disulfide bonds link C40/C93, C47/C53, C63/C78, C95/C105, C161/C222, C168/C174, C185/C200, C195/C241, C224/C229, C251/C323, C258/C264, C275/C293, C285/C347, and C325/C335. Residue N52 is glycosylated (N-linked (GlcNAc...) asparagine). 2 N-linked (GlcNAc...) asparagine glycosylation sites follow: N357 and N413. The GPI-anchor amidated serine moiety is linked to residue S444. A propeptide spans 445-464 (removed in mature form); that stretch reads RARPSAALTVLSVLMLKLAL.

Belongs to the GDNFR family. In terms of assembly, interacts with NRTN ligand and RET: forms a 2:2:2 ternary complex composed of NRTN ligand, GFRA2 and RET receptor. Also forms a 4:4:4 tetrameric complex composed of 4 copies of NRTN ligand, GFRA2 and RET receptor, which prevents endocytosis of RET. Interacts with SORL1.

The protein resides in the cell membrane. Its function is as follows. Receptor for neurturin (NRTN), a growth factor that supports the survival of sympathetic neurons. NRTN-binding leads to autophosphorylation and activation of the RET receptor. Also able to mediate GDNF signaling through the RET tyrosine kinase receptor. The sequence is that of GDNF family receptor alpha-2 (GFRA2) from Pongo abelii (Sumatran orangutan).